The chain runs to 557 residues: MSKLIRRVVTVLALTSMASSFASGKIEAAAAESLATRFIASTENSNDNVLQATAKKVRFGRNKNQRQEQKHTGAFCDKEFYPCEGGQCQSVDTTQESCYGKMYCVRVNDDCNVEISQAVPEYATVGSPYPIEILAVGKKDCVNVVITQQLPCEVEFVSSDPATTPTSDSKLIWTIDCLGQGEKCKITVWVKPLKEGCCFTAATVCACPELRSYTKCGQPAICIKQEGPECACLRCPVCYKIEVCNTGSAIARNVVVDNPVPDGYTHASGQRVLSFNLGDMRPGDSKCFSVEFCPQKRGKITNVATVSYCGGHKCSANVTTVVNEPCVQVNISGADWSYVCKPVEYTIVVSNLGDLKLYDVVVEDTVPSGATILEAEGAEICCNKAVWCIKEMCPGETLQFKVVAKAQSPGKFTNQVVVKTNSDCGTCTSCAEATTHWKGLAATHMCVIDTNDPICVGENTVYRICVTNRGSAEDTNVSLILKFSKELQPVSSSGPTKGTITGNTVVFDALPKLGSKESVEFSVTLKGIAPGDARGEAILSSDTLTVPVADTENTHVY.

The signal sequence occupies residues 1–22 (MSKLIRRVVTVLALTSMASSFA). A propeptide spanning residues 23-40 (SGKIEAAAAESLATRFIA) is cleaved from the precursor.

Part of a disulfide cross-linked outer membrane complex (COMC) composed of the major outer membrane porin (MOMP), the small cysteine-rich protein (OmcA) and the large cysteine-rich periplasmic protein (OmcB).

It localises to the periplasm. Its function is as follows. In elementary bodies (EBs, the infectious stage, which is able to survive outside the host cell) provides the structural integrity of the outer envelope through disulfide cross-links with the small cysteine-rich protein and the major outer membrane porin. It has been described in publications as the Sarkosyl-insoluble COMC (Chlamydia outer membrane complex), and serves as the functional equivalent of peptidoglycan. It is present but the disulfide bonds are reduced in reticulate bodies (RBs). This is Large cysteine-rich periplasmic protein OmcB (omcB) from Chlamydia abortus (strain DSM 27085 / S26/3) (Chlamydophila abortus).